The following is a 680-amino-acid chain: Chaperone protein dnaK3 (680 aa).

Thr-205 is modified (phosphothreonine; by autocatalysis). Residues Gly-640 to Trp-680 are disordered.

It belongs to the heat shock protein 70 family.

Functionally, acts as a chaperone. The chain is Chaperone protein dnaK3 (dnaK3) from Thermosynechococcus vestitus (strain NIES-2133 / IAM M-273 / BP-1).